The following is a 285-amino-acid chain: UPF0354 protein SACOL1793 (285 aa).

This sequence belongs to the UPF0354 family.

The protein is UPF0354 protein SACOL1793 of Staphylococcus aureus (strain COL).